Here is a 563-residue protein sequence, read N- to C-terminus: Protein NRT1/ PTR FAMILY 5.9 (563 aa).

The chain crosses the membrane as a helical span at residues 56–76 (TWAGFTSMLPLFSAPLADTYW). Thr81 carries the post-translational modification Phosphothreonine. Transmembrane regions (helical) follow at residues 82–102 (ILAS…TAFA), 110–130 (TISS…LGVL), 168–188 (FFQL…TVMA), 194–214 (FGWV…ILVF), 317–337 (FPIW…ATFF), 362–382 (TITL…IPIT), 394–414 (VMER…IAAI), 441–461 (IFWL…TVVG), 479–499 (FALY…LISI), and 528–548 (WLLA…CKFF).

The protein belongs to the major facilitator superfamily. Proton-dependent oligopeptide transporter (POT/PTR) (TC 2.A.17) family. As to expression, expressed in roots and flowers.

It localises to the membrane. This Arabidopsis thaliana (Mouse-ear cress) protein is Protein NRT1/ PTR FAMILY 5.9 (NPF5.9).